The primary structure comprises 352 residues: [Citrate [pro-3S]-lyase] ligase (352 aa).

The N-acetyltransferase domain occupies 1–128 (MFGNDIFTRV…VMVLMENSAT (128 aa)).

The enzyme catalyses holo-[citrate lyase ACP] + acetate + ATP = acetyl-[citrate lyase ACP] + AMP + diphosphate. In terms of biological role, acetylation of prosthetic group (2-(5''-phosphoribosyl)-3'-dephosphocoenzyme-A) of the gamma subunit of citrate lyase. The polypeptide is [Citrate [pro-3S]-lyase] ligase (citC) (Escherichia coli (strain K12)).